We begin with the raw amino-acid sequence, 600 residues long: Sodium- and chloride-dependent betaine transporter (600 aa).

Residues 1 to 31 (MGTSEHVPLPTDEAKAKELEQSQHSEEPDRG) are disordered. The Cytoplasmic portion of the chain corresponds to 1 to 38 (MGTSEHVPLPTDEAKAKELEQSQHSEEPDRGQWTGKFD). A compositionally biased stretch (basic and acidic residues) spans 12–30 (DEAKAKELEQSQHSEEPDR). Transmembrane regions (helical) follow at residues 39–59 (FLMSMVAYAVGLGNVWRFPYL), 68–88 (FLVVYMIFFCLAAVPIFLMEV), and 116–136 (VVIAFMCIAYFCVIVAWAMFY). At 137-207 (MISSIAWVFP…DTGDISEFGG (71 aa)) the chain is on the extracellular side. N165 carries N-linked (GlcNAc...) asparagine glycosylation. The next 2 helical transmembrane spans lie at 208–228 (IQWELFFIMAAAWLIVYFALW) and 237–257 (FVYFCALFPYVLIFILLIRGL). The N-linked (GlcNAc...) asparagine glycan is linked to N273. Transmembrane regions (helical) follow at residues 286–306 (AGTQVFYSYGVGFGALIALGS), 321–341 (MCFINGCTSITAGFAVFSILG), 378–398 (VFAVLFFLMITILGLDSQVCM), 420–440 (SLGIFCLFFFCIGIPMVTHSG), 454–474 (GYALLFVVFFEVVGLAYGFGA), 499–519 (FCAPATSLVLFVFCVVYYHPV), and 536–556 (WFLSSCSMVVIPGYAIYYLFF). The Cytoplasmic segment spans residues 557 to 600 (TNKHLTLKERVRKGLNLDGSFESPAKKNLVNNAEELKFIESSSQ).

Belongs to the sodium:neurotransmitter symporter (SNF) family. As to expression, highly expressed in the head, the excretory canal, tail hypodermal cells, epidermis and vulval epithelial cells. Expressed in the excretory canal-associated neuron and in some non-amphidial sensory neurons in the head (at protein level).

The protein localises to the cell membrane. Functionally, betaine transporter dependent on Na(+) and Cl(-) ions that functions primarily in the epidermis to clear betaine from the extracellular space. Elicits current in response to betaine but not in response to GABA, L-carnitine, sarcosine, glycine or dimethylglycine. This is Sodium- and chloride-dependent betaine transporter from Caenorhabditis elegans.